The following is an 89-amino-acid chain: MKPMYRSRSWRRKYVRTPGGRVVIHFERKKPKIAHCAMCGRPLNGIPRGRPVEMRKLPKTKKRPERPMPHLCPRCMRKVMKEQIRAQLS.

Residues 45–71 (GIPRGRPVEMRKLPKTKKRPERPMPHL) are disordered.

Belongs to the eukaryotic ribosomal protein eL34 family. Part of the 50S ribosomal subunit.

The protein is Large ribosomal subunit protein eL34 of Pyrococcus furiosus (strain ATCC 43587 / DSM 3638 / JCM 8422 / Vc1).